Reading from the N-terminus, the 221-residue chain is Urease accessory protein UreG (221 aa).

19–26 is a binding site for GTP; it reads GPVGSGKT.

This sequence belongs to the SIMIBI class G3E GTPase family. UreG subfamily. As to quaternary structure, homodimer. UreD, UreF and UreG form a complex that acts as a GTP-hydrolysis-dependent molecular chaperone, activating the urease apoprotein by helping to assemble the nickel containing metallocenter of UreC. The UreE protein probably delivers the nickel.

The protein resides in the cytoplasm. In terms of biological role, facilitates the functional incorporation of the urease nickel metallocenter. This process requires GTP hydrolysis, probably effectuated by UreG. This is Urease accessory protein UreG from Yersinia enterocolitica serotype O:8 / biotype 1B (strain NCTC 13174 / 8081).